The primary structure comprises 153 residues: Small ribosomal subunit protein uS7c (153 aa).

The protein belongs to the universal ribosomal protein uS7 family. In terms of assembly, part of the 30S ribosomal subunit.

The protein resides in the plastid. Functionally, one of the primary rRNA binding proteins, it binds directly to 16S rRNA where it nucleates assembly of the head domain of the 30S subunit. The protein is Small ribosomal subunit protein uS7c (rps7) of Helicosporidium sp. subsp. Simulium jonesii (Green alga).